The following is a 439-amino-acid chain: Homogentisate 1,2-dioxygenase (439 aa).

The Fe cation site is built by His335, Glu341, and His371.

This sequence belongs to the homogentisate dioxygenase family. It depends on Fe cation as a cofactor.

The enzyme catalyses homogentisate + O2 = 4-maleylacetoacetate + H(+). The protein operates within amino-acid degradation; L-phenylalanine degradation; acetoacetate and fumarate from L-phenylalanine: step 4/6. The sequence is that of Homogentisate 1,2-dioxygenase from Drosophila melanogaster (Fruit fly).